Consider the following 92-residue polypeptide: Small ribosomal subunit protein uS19 (92 aa).

It belongs to the universal ribosomal protein uS19 family.

Its function is as follows. Protein S19 forms a complex with S13 that binds strongly to the 16S ribosomal RNA. This chain is Small ribosomal subunit protein uS19, found in Mycoplasmopsis agalactiae (strain NCTC 10123 / CIP 59.7 / PG2) (Mycoplasma agalactiae).